Consider the following 489-residue polypeptide: 5'-AMP-activated protein kinase subunit gamma-3 (489 aa).

Residues Met1–Gly113 are disordered. Positions Ser34 to Ser46 are enriched in low complexity. Basic residues predominate over residues Arg50–Arg62. CBS domains lie at Met197 to Leu258, Cys280 to Arg340, and Thr355 to Met415. ADP is bound by residues Arg225, Met240–Asp245, Val285, His306–Arg307, and Lys325. Residues Arg225, Met240 to Asp245, Val285, His306, His306 to Arg307, Lys325, Thr355, Ala360, Ser381 to Ala382, Ser397 to Asp400, Arg424, Leu432, His453, His453 to Arg454, and Ser469 to Asp472 contribute to the AMP site. Residues Arg225, Met240–Asp245, Val285, His306–Arg307, Arg307, and Lys325 each bind ATP. The AMPK pseudosubstrate motif lies at Leu293–Val314. ADP is bound by residues Ser397–Asp400, Arg424, Leu432, and His453–Arg454. ATP-binding positions include Ser397–Asp400, Arg424, Leu432, and His453–Arg454. In terms of domain architecture, CBS 4 spans Cys427–Ala486.

It belongs to the 5'-AMP-activated protein kinase gamma subunit family. AMPK is a heterotrimer of an alpha catalytic subunit (PRKAA1 or PRKAA2), a beta (PRKAB1 or PRKAB2) and a gamma non-catalytic subunits (PRKAG1, PRKAG2 or PRKAG3). Interacts with FNIP1 and FNIP2. Post-translationally, phosphorylated by ULK1; leading to negatively regulate AMPK activity and suggesting the existence of a regulatory feedback loop between ULK1 and AMPK. Glycosylated; O-GlcNAcylated by OGT, promoting the AMP-activated protein kinase (AMPK) activity. As to expression, skeletal muscle, with weak expression in heart and pancreas.

Functionally, AMP/ATP-binding subunit of AMP-activated protein kinase (AMPK), an energy sensor protein kinase that plays a key role in regulating cellular energy metabolism. In response to reduction of intracellular ATP levels, AMPK activates energy-producing pathways and inhibits energy-consuming processes: inhibits protein, carbohydrate and lipid biosynthesis, as well as cell growth and proliferation. AMPK acts via direct phosphorylation of metabolic enzymes, and by longer-term effects via phosphorylation of transcription regulators. AMPK also acts as a regulator of cellular polarity by remodeling the actin cytoskeleton; probably by indirectly activating myosin. The AMPK gamma3 subunit is a non-catalytic subunit with a regulatory role in muscle energy metabolism. It mediates binding to AMP, ADP and ATP, leading to AMPK activation or inhibition: AMP-binding results in allosteric activation of alpha catalytic subunit (PRKAA1 or PRKAA2) both by inducing phosphorylation and preventing dephosphorylation of catalytic subunits. ADP also stimulates phosphorylation, without stimulating already phosphorylated catalytic subunit. ATP promotes dephosphorylation of catalytic subunit, rendering the AMPK enzyme inactive. The sequence is that of 5'-AMP-activated protein kinase subunit gamma-3 (PRKAG3) from Homo sapiens (Human).